The sequence spans 856 residues: MNESKSVASNELTSGKVERTTLKLSDKLKISSNIQQGNKFSLNKSITTVEVRKSKKRKNIDEAARSSLLLQNNDIDGNSEDKNSLTIQEQISRMNALQNASNNEKREELSSDSNKHIEEEVISVKAEVEQPVDVVLPNDNLLIESDSSEKVIVDPVTDSEHADKDVQDVVMLDEFVSSNLDDAGDQKNGDQSDDISDLLEHKGIEGKKLKKYEKEHEEKKGNPKKVMSNNTYTKHVKLVIEEELEEDNNKQVIKNYRSKKNRVTNRSVKNKITRKVLIPNKITVQELANSMSERVKDVQQVLYQITGKHDIKLTDYLDSDQASIIVEAFNHTFKLVDNAKLENDLYSDGNNMELIPRAPVVTVMGHVDHGKTSLLDAIRESNVVDGEFKGITQHIGAYQITLNGDKKITFIDTPGHEAFAAMRAHGTNVTDIVVLVVAADDGIMPQTIESINHVKAANVAMIVAVNKIDKHDADLDRITNALLQHGVVAESLGGDVIVVPVSAKEKINLDQLKSSILLIADLLELKAVYNTRASGTVIESKVDKNCGVVATLIVQKGTLKVGDIIVAGNQAYGRVRNMFNADGGSEKVAIPSMPVKVFGLNNVPNFGTSFIVVDSEKQARELINYRQDLLNVELSKQPAIDKSNVLLYDMVDELNVILKCDVMGSIEAICYSIGKITHKDIRVNILYKGVGNITKSDVLLAETSNSIILAFNVKTDTQVKELAKQKNIEIKHYFVIYDIIDDIKKILTGMLKPLKQEVQIGTLSVRKVFSVGNNGSVLGCYVTSGLVKKGALVKLVRNNNIIHEGKIKVLRRFKDDVKEVTAGFECGILLDYSKEIYPESDVMNIFEIVEEIRVIQ.

Residues 356 to 526 (PRAPVVTVMG…LLIADLLELK (171 aa)) enclose the tr-type G domain. A G1 region spans residues 365–372 (GHVDHGKT). A GTP-binding site is contributed by 365-372 (GHVDHGKT). A G2 region spans residues 390–394 (GITQH). Residues 412-415 (DTPG) are G3. Residues 412-416 (DTPGH) and 466-469 (NKID) each bind GTP. The interval 466-469 (NKID) is G4. Residues 502 to 504 (SAK) are G5.

Belongs to the TRAFAC class translation factor GTPase superfamily. Classic translation factor GTPase family. IF-2 subfamily.

The protein localises to the cytoplasm. Functionally, one of the essential components for the initiation of protein synthesis. Protects formylmethionyl-tRNA from spontaneous hydrolysis and promotes its binding to the 30S ribosomal subunits. Also involved in the hydrolysis of GTP during the formation of the 70S ribosomal complex. This Ehrlichia ruminantium (strain Gardel) protein is Translation initiation factor IF-2.